The following is a 191-amino-acid chain: Cell division protein SepF (191 aa).

Over residues Ser-151–Glu-165 the composition is skewed to low complexity. Residues Ser-151–Ser-191 are disordered. Residues Asn-166–Pro-178 show a composition bias toward polar residues.

This sequence belongs to the SepF family. As to quaternary structure, homodimer. Interacts with FtsZ.

It localises to the cytoplasm. In terms of biological role, cell division protein that is part of the divisome complex and is recruited early to the Z-ring. Probably stimulates Z-ring formation, perhaps through the cross-linking of FtsZ protofilaments. Its function overlaps with FtsA. In Prochlorococcus marinus (strain MIT 9215), this protein is Cell division protein SepF.